A 182-amino-acid polypeptide reads, in one-letter code: Bifunctional protein PyrR (182 aa).

The PRPP-binding motif lies at 99-111 (IVLVDDVIFTGRT).

The protein belongs to the purine/pyrimidine phosphoribosyltransferase family. PyrR subfamily. As to quaternary structure, homodimer and homohexamer; in equilibrium.

It catalyses the reaction UMP + diphosphate = 5-phospho-alpha-D-ribose 1-diphosphate + uracil. Regulates transcriptional attenuation of the pyrimidine nucleotide (pyr) operon by binding in a uridine-dependent manner to specific sites on pyr mRNA. This disrupts an antiterminator hairpin in the RNA and favors formation of a downstream transcription terminator, leading to a reduced expression of downstream genes. Its function is as follows. Also displays a weak uracil phosphoribosyltransferase activity which is not physiologically significant. The sequence is that of Bifunctional protein PyrR from Caldicellulosiruptor saccharolyticus (strain ATCC 43494 / DSM 8903 / Tp8T 6331).